We begin with the raw amino-acid sequence, 311 residues long: HPr kinase/phosphorylase (311 aa).

Active-site residues include His138 and Lys159. Residue 153 to 160 participates in ATP binding; that stretch reads GDSGIGKS. Position 160 (Ser160) interacts with Mg(2+). Residue Asp177 is the Proton acceptor; for phosphorylation activity. Proton donor; for dephosphorylation activity of the active site. An important for the catalytic mechanism of both phosphorylation and dephosphorylation region spans residues 201–210; sequence LEIRGVGIID. Glu202 lines the Mg(2+) pocket. Residue Arg243 is part of the active site. The important for the catalytic mechanism of dephosphorylation stretch occupies residues 264 to 269; sequence PVKTGR.

It belongs to the HPrK/P family. Homohexamer. It depends on Mg(2+) as a cofactor.

The enzyme catalyses [HPr protein]-L-serine + ATP = [HPr protein]-O-phospho-L-serine + ADP + H(+). The catalysed reaction is [HPr protein]-O-phospho-L-serine + phosphate + H(+) = [HPr protein]-L-serine + diphosphate. In terms of biological role, catalyzes the ATP- as well as the pyrophosphate-dependent phosphorylation of a specific serine residue in HPr, a phosphocarrier protein of the phosphoenolpyruvate-dependent sugar phosphotransferase system (PTS). HprK/P also catalyzes the pyrophosphate-producing, inorganic phosphate-dependent dephosphorylation (phosphorolysis) of seryl-phosphorylated HPr (P-Ser-HPr). The two antagonistic activities of HprK/P are regulated by several intracellular metabolites, which change their concentration in response to the absence or presence of rapidly metabolisable carbon sources (glucose, fructose, etc.) in the growth medium. Therefore, by controlling the phosphorylation state of HPr, HPrK/P is a sensor enzyme that plays a major role in the regulation of carbon metabolism and sugar transport: it mediates carbon catabolite repression (CCR), and regulates PTS-catalyzed carbohydrate uptake and inducer exclusion. The chain is HPr kinase/phosphorylase from Streptococcus gordonii (strain Challis / ATCC 35105 / BCRC 15272 / CH1 / DL1 / V288).